A 346-amino-acid polypeptide reads, in one-letter code: L-threonine 3-dehydrogenase (346 aa).

C42 is a Zn(2+) binding site. Residues T44 and H47 each act as charge relay system in the active site. Zn(2+)-binding residues include H67, E68, C97, C100, C103, and C111. NAD(+) is bound by residues I179, D199, R204, 266 to 268, and 291 to 292; these read LSL and IT.

Belongs to the zinc-containing alcohol dehydrogenase family. In terms of assembly, homotetramer. The cofactor is Zn(2+).

The protein resides in the cytoplasm. It carries out the reaction L-threonine + NAD(+) = (2S)-2-amino-3-oxobutanoate + NADH + H(+). The protein operates within amino-acid degradation; L-threonine degradation via oxydo-reductase pathway; glycine from L-threonine: step 1/2. In terms of biological role, catalyzes the NAD(+)-dependent oxidation of L-threonine to 2-amino-3-ketobutyrate. In Bacillus licheniformis (strain ATCC 14580 / DSM 13 / JCM 2505 / CCUG 7422 / NBRC 12200 / NCIMB 9375 / NCTC 10341 / NRRL NRS-1264 / Gibson 46), this protein is L-threonine 3-dehydrogenase.